The chain runs to 355 residues: Enhancer of mRNA-decapping protein 1 (355 aa).

3 disordered regions span residues 1–146 (MSSD…VDGM), 210–230 (MSQPMSQPMSQPMSQPMSQPM), and 301–330 (NSTAKASVRSKGSPGSEGGSRRSQNWKSSQ). The span at 39-49 (AQKQQLPNGEQ) shows a compositional bias: polar residues. Residues 57–67 (KQSRKRGSGRQ) show a composition bias toward basic residues. Over residues 91-110 (SIPSGSAGSESAQKETSAGQ) the composition is skewed to polar residues. Over residues 123 to 142 (VPAGGPAGKSSSEPASASSA) the composition is skewed to low complexity.

The protein belongs to the EDC family.

The protein localises to the cytoplasm. MRNA-binding protein which stimulates mRNA decapping. In Eremothecium gossypii (strain ATCC 10895 / CBS 109.51 / FGSC 9923 / NRRL Y-1056) (Yeast), this protein is Enhancer of mRNA-decapping protein 1 (EDC1).